Reading from the N-terminus, the 489-residue chain is Male-specific lethal 1-like 1 (489 aa).

Disordered regions lie at residues 126–164 (PMVSNDNNQQREGEQVGAMVGDSSPEDSPSGKHWNVRKG) and 224–311 (VKKD…EDMQ). A coiled-coil region spans residues 179–227 (LLLQLELIEQQQKHLHNKNKEIEDLKAEKEMLMARIERMEHRLQMVKKD). Residues 347–466 (TVEVPSWRES…LKQQDFDLPW (120 aa)) form the PEHE domain. The segment at 371–389 (ECLDDSVFLKRHSKLELDE) is interaction with KAT8 HAT domain. The short motif at 380–394 (KRHSKLELDEKRRKR) is the Bipartite nuclear localization signal element.

Belongs to the msl-1 family. As to quaternary structure, component of a multisubunit histone acetyltransferase complex (MSL). Interacts (via PEHE domain) with KAT8 (via HAT domain) and MSL3 (via MRG domain); both interactions are direct.

The protein resides in the nucleus. Its subcellular location is the nucleoplasm. It localises to the nucleus speckle. In terms of biological role, component of histone acetyltransferase complex. Within MSL complex, promotes ubiquitination of histone H2B. The sequence is that of Male-specific lethal 1-like 1 (msl1l1) from Danio rerio (Zebrafish).